The following is an 87-amino-acid chain: MSEKLKIVYRPLQELSPYAHNARTHSTEQVAQLVESIKQFGWTNPVLIDEKGEIIAGHGRVMAAEMLKMDSVPVIVLSGLTDEQKQR.

This Escherichia coli (strain K12) protein is ParB-like nuclease domain-containing protein YnaK (ynaK).